We begin with the raw amino-acid sequence, 547 residues long: Probable terpene synthase 3 (547 aa).

Mg(2+) contacts are provided by Asp298, Asp302, and Glu451. Residues 298 to 302 (DDIYD) carry the DDXXD motif motif.

The protein belongs to the terpene synthase family. It depends on Mg(2+) as a cofactor.

Probable sesquiterpene synthase. This Ricinus communis (Castor bean) protein is Probable terpene synthase 3 (TPS3).